We begin with the raw amino-acid sequence, 123 residues long: MIVGIGIDIVYIPRILNLWKKFGNKFLKKVFSQEEIKDSNKYTSCEGKARHFAKRFAAKEAYVKALGTGFGKSIKMSDITTYNTLYGKPQITVKKSNIDYKAELSLSDDTDYAIAFIILHKES.

Mg(2+) contacts are provided by aspartate 8 and glutamate 60.

Belongs to the P-Pant transferase superfamily. AcpS family. Requires Mg(2+) as cofactor.

Its subcellular location is the cytoplasm. It catalyses the reaction apo-[ACP] + CoA = holo-[ACP] + adenosine 3',5'-bisphosphate + H(+). Functionally, transfers the 4'-phosphopantetheine moiety from coenzyme A to a Ser of acyl-carrier-protein. In Ehrlichia ruminantium (strain Welgevonden), this protein is Holo-[acyl-carrier-protein] synthase.